We begin with the raw amino-acid sequence, 245 residues long: 8-amino-3,8-dideoxy-manno-octulosonate cytidylyltransferase (245 aa).

The protein belongs to the KdsB family.

It is found in the cytoplasm. The catalysed reaction is 8-amino-3,8-dideoxy-alpha-D-manno-octulosonate + CTP = CMP-8-amino-3,8-dideoxy-alpha-D-manno-oct-2-ulosonate + diphosphate. The protein operates within bacterial outer membrane biogenesis; lipopolysaccharide biosynthesis. Its function is as follows. Activates KDO8N (a required 8-carbon sugar) for incorporation into bacterial lipopolysaccharide in the Shewanella genus. This Shewanella pealeana (strain ATCC 700345 / ANG-SQ1) protein is 8-amino-3,8-dideoxy-manno-octulosonate cytidylyltransferase.